Here is a 522-residue protein sequence, read N- to C-terminus: Tetratricopeptide repeat and J domain-containing co-chaperone DNJ1 (522 aa).

Positions 1–22 (MKGFLLVALPVLFLSLSTQVFG) are cleaved as a signal peptide. TPR repeat units lie at residues 29–62 (AAQI…DPTG), 63–96 (YANY…NPGF), 97–130 (VQAH…KSDS), 142–175 (GEAA…GPNS), 210–243 (TYLP…DPDS), 256–289 (LEKD…LVRF), and 356–389 (VDSW…SGRS). One can recognise a J domain in the interval 410-471 (DYYKVLGVPR…ELRQRYDNGD (62 aa)). The segment at 465-494 (QRYDNGDDPNDPTGGQQHNPFAHHGGGMPF) is disordered.

Its subcellular location is the endoplasmic reticulum lumen. Endoplasmic reticulum co-chaperone crucial for survival and virulence factor production at elevated temperatures representative of febrile patients during infection. Contributes to virulence in a mouse model of cryptococcosis. With chaperone CNE1, coordinately maintains ER homeostasis and contributes to maintenance of cell wall architecture. The protein is Tetratricopeptide repeat and J domain-containing co-chaperone DNJ1 of Cryptococcus neoformans var. grubii serotype A (strain H99 / ATCC 208821 / CBS 10515 / FGSC 9487) (Filobasidiella neoformans var. grubii).